The following is a 479-amino-acid chain: Aspartyl/glutamyl-tRNA(Asn/Gln) amidotransferase subunit B (479 aa).

It belongs to the GatB/GatE family. GatB subfamily. As to quaternary structure, heterotrimer of A, B and C subunits.

The catalysed reaction is L-glutamyl-tRNA(Gln) + L-glutamine + ATP + H2O = L-glutaminyl-tRNA(Gln) + L-glutamate + ADP + phosphate + H(+). The enzyme catalyses L-aspartyl-tRNA(Asn) + L-glutamine + ATP + H2O = L-asparaginyl-tRNA(Asn) + L-glutamate + ADP + phosphate + 2 H(+). Its function is as follows. Allows the formation of correctly charged Asn-tRNA(Asn) or Gln-tRNA(Gln) through the transamidation of misacylated Asp-tRNA(Asn) or Glu-tRNA(Gln) in organisms which lack either or both of asparaginyl-tRNA or glutaminyl-tRNA synthetases. The reaction takes place in the presence of glutamine and ATP through an activated phospho-Asp-tRNA(Asn) or phospho-Glu-tRNA(Gln). The sequence is that of Aspartyl/glutamyl-tRNA(Asn/Gln) amidotransferase subunit B from Streptococcus pyogenes serotype M6 (strain ATCC BAA-946 / MGAS10394).